The primary structure comprises 378 residues: UPF0754 membrane protein BCE33L0760 (378 aa).

The next 2 membrane-spanning stretches (helical) occupy residues Met-1 to Thr-21 and Tyr-357 to Leu-377.

It belongs to the UPF0754 family.

Its subcellular location is the cell membrane. The polypeptide is UPF0754 membrane protein BCE33L0760 (Bacillus cereus (strain ZK / E33L)).